Consider the following 145-residue polypeptide: MLTVLQRVKEARVDIDGQTVGKINHGLLILCGFEPKDSLENIKRMLDKCINYRIFEDPSGKMNLSLKDVNGGLLLVPQFTLMADTQKGLRPSFSNAASPELGRELFDNLLTLAQKCHQNTQSGCFGANMQVYLCNDGPVTFLLQF.

The short motif at 137-138 (GP) is the Gly-cisPro motif, important for rejection of L-amino acids element.

It belongs to the DTD family. As to quaternary structure, homodimer.

Its subcellular location is the cytoplasm. It catalyses the reaction glycyl-tRNA(Ala) + H2O = tRNA(Ala) + glycine + H(+). The catalysed reaction is a D-aminoacyl-tRNA + H2O = a tRNA + a D-alpha-amino acid + H(+). An aminoacyl-tRNA editing enzyme that deacylates mischarged D-aminoacyl-tRNAs. Also deacylates mischarged glycyl-tRNA(Ala), protecting cells against glycine mischarging by AlaRS. Acts via tRNA-based rather than protein-based catalysis; rejects L-amino acids rather than detecting D-amino acids in the active site. By recycling D-aminoacyl-tRNA to D-amino acids and free tRNA molecules, this enzyme counteracts the toxicity associated with the formation of D-aminoacyl-tRNA entities in vivo and helps enforce protein L-homochirality. In Legionella pneumophila (strain Paris), this protein is D-aminoacyl-tRNA deacylase.